The chain runs to 528 residues: Ribonuclease Y (528 aa).

A helical membrane pass occupies residues 15 to 35; it reads SLFFLALICGSIIGYFLYSFF. The KH domain maps to 217 to 277; that stretch reads NISVVNIPNE…IRREIAKKTL (61 aa). The region spanning 343-436 is the HD domain; the sequence is VLKHSLEVAF…VAIADTLSSA (94 aa).

It belongs to the RNase Y family.

The protein resides in the cell membrane. In terms of biological role, endoribonuclease that initiates mRNA decay. This Aster yellows witches'-broom phytoplasma (strain AYWB) protein is Ribonuclease Y.